The sequence spans 371 residues: Phospho-N-acetylmuramoyl-pentapeptide-transferase (371 aa).

11 helical membrane-spanning segments follow: residues 21–41 (NHIL…DFYY), 46–66 (LTIP…IGIP), 92–112 (PTMG…ILYF), 119–139 (IILT…IDDF), 156–176 (ILLQ…NNLI), 182–202 (IANK…FVLL), 216–236 (GLLS…ILIE), 241–261 (NSTL…FLFL), 268–288 (LFMG…IALI), 296–316 (LIMG…VSIF), and 349–369 (IVSS…IFLI).

This sequence belongs to the glycosyltransferase 4 family. MraY subfamily. Mg(2+) serves as cofactor.

Its subcellular location is the cell inner membrane. It carries out the reaction UDP-N-acetyl-alpha-D-muramoyl-L-alanyl-gamma-D-glutamyl-meso-2,6-diaminopimeloyl-D-alanyl-D-alanine + di-trans,octa-cis-undecaprenyl phosphate = di-trans,octa-cis-undecaprenyl diphospho-N-acetyl-alpha-D-muramoyl-L-alanyl-D-glutamyl-meso-2,6-diaminopimeloyl-D-alanyl-D-alanine + UMP. It participates in cell wall biogenesis; peptidoglycan biosynthesis. In terms of biological role, catalyzes the initial step of the lipid cycle reactions in the biosynthesis of the cell wall peptidoglycan: transfers peptidoglycan precursor phospho-MurNAc-pentapeptide from UDP-MurNAc-pentapeptide onto the lipid carrier undecaprenyl phosphate, yielding undecaprenyl-pyrophosphoryl-MurNAc-pentapeptide, known as lipid I. The sequence is that of Phospho-N-acetylmuramoyl-pentapeptide-transferase from Prochlorococcus marinus (strain NATL2A).